A 312-amino-acid polypeptide reads, in one-letter code: Gamma-soluble NSF attachment protein (312 aa).

The disordered stretch occupies residues 281–312 (KKKSPATPQAKPDGVTATAADEEEDEYSGGLC). Serine 284 is modified (phosphoserine). Threonine 287 is modified (phosphothreonine). Acidic residues predominate over residues 300–312 (ADEEEDEYSGGLC). Serine 308 carries the phosphoserine modification.

This sequence belongs to the SNAP family. In terms of assembly, interacts with RAB11FIP5. Interacts with VTI1A.

The protein resides in the membrane. It localises to the golgi apparatus. Required for vesicular transport between the endoplasmic reticulum and the Golgi apparatus. The sequence is that of Gamma-soluble NSF attachment protein from Homo sapiens (Human).